The chain runs to 183 residues: RNA 2',3'-cyclic phosphodiesterase (183 aa).

His44 functions as the Proton donor in the catalytic mechanism. 2 consecutive short sequence motifs (HXTX) follow at residues 44 to 47 (HITL) and 130 to 133 (HMTL). His130 serves as the catalytic Proton acceptor.

Belongs to the 2H phosphoesterase superfamily. ThpR family.

It carries out the reaction a 3'-end 2',3'-cyclophospho-ribonucleotide-RNA + H2O = a 3'-end 2'-phospho-ribonucleotide-RNA + H(+). Functionally, hydrolyzes RNA 2',3'-cyclic phosphodiester to an RNA 2'-phosphomonoester. The protein is RNA 2',3'-cyclic phosphodiesterase (ytlP) of Bacillus subtilis (strain 168).